Consider the following 140-residue polypeptide: uncharacterized protein (140 aa).

Helical transmembrane passes span 4 to 21 (ILKF…YLFG) and 26 to 48 (LVKV…SGYL).

Belongs to the bacteriophage holin family. Cp-1 holin subfamily.

It is found in the cell membrane. This is an uncharacterized protein from Listeria monocytogenes serovar 1/2a (strain ATCC BAA-679 / EGD-e).